Here is a 399-residue protein sequence, read N- to C-terminus: Stearoyl-[acyl-carrier-protein] 9-desaturase, chloroplastic (399 aa).

Positions 1–12 (MALNLNPVSTPF) are enriched in polar residues. The N-terminal 35 residues, 1 to 35 (MALNLNPVSTPFQCRRLPSFSPRQTPSRRSPKFFM), are a transit peptide targeting the chloroplast. A disordered region spans residues 1 to 57 (MALNLNPVSTPFQCRRLPSFSPRQTPSRRSPKFFMASTLSSSSPKEAESLKKPFSPP). Fe cation is bound by residues glutamate 141, glutamate 179, histidine 182, glutamate 232, glutamate 265, and histidine 268.

Belongs to the fatty acid desaturase type 2 family. In terms of assembly, homodimer. It depends on Fe(2+) as a cofactor.

The protein resides in the plastid. It localises to the chloroplast. The enzyme catalyses octadecanoyl-[ACP] + 2 reduced [2Fe-2S]-[ferredoxin] + O2 + 2 H(+) = (9Z)-octadecenoyl-[ACP] + 2 oxidized [2Fe-2S]-[ferredoxin] + 2 H2O. Its pathway is lipid metabolism; fatty acid metabolism. In terms of biological role, converts stearoyl-ACP to oleoyl-ACP by introduction of a cis double bond between carbons 9 and 10 of the acyl chain. The polypeptide is Stearoyl-[acyl-carrier-protein] 9-desaturase, chloroplastic (Spinacia oleracea (Spinach)).